A 166-amino-acid polypeptide reads, in one-letter code: 3-isopropylmalate dehydratase small subunit (166 aa).

It belongs to the LeuD family. LeuD type 2 subfamily. In terms of assembly, heterodimer of LeuC and LeuD.

It carries out the reaction (2R,3S)-3-isopropylmalate = (2S)-2-isopropylmalate. It participates in amino-acid biosynthesis; L-leucine biosynthesis; L-leucine from 3-methyl-2-oxobutanoate: step 2/4. Catalyzes the isomerization between 2-isopropylmalate and 3-isopropylmalate, via the formation of 2-isopropylmaleate. In Aliarcobacter butzleri (strain RM4018) (Arcobacter butzleri), this protein is 3-isopropylmalate dehydratase small subunit.